A 640-amino-acid chain; its full sequence is Threonine--tRNA ligase (640 aa).

The TGS domain occupies 1–61 (MPIITLPDGN…EKDSEVNIIT (61 aa)). Positions 242-533 (DHRRIAKQMS…LIEHYAGRMP (292 aa)) are catalytic. 3 residues coordinate Zn(2+): Cys333, His384, and His510.

The protein belongs to the class-II aminoacyl-tRNA synthetase family. As to quaternary structure, homodimer. It depends on Zn(2+) as a cofactor.

Its subcellular location is the cytoplasm. It catalyses the reaction tRNA(Thr) + L-threonine + ATP = L-threonyl-tRNA(Thr) + AMP + diphosphate + H(+). Functionally, catalyzes the attachment of threonine to tRNA(Thr) in a two-step reaction: L-threonine is first activated by ATP to form Thr-AMP and then transferred to the acceptor end of tRNA(Thr). Also edits incorrectly charged L-seryl-tRNA(Thr). This Prochlorococcus marinus (strain MIT 9303) protein is Threonine--tRNA ligase.